The chain runs to 94 residues: C-X-C motif chemokine 11-1 (94 aa).

The N-terminal stretch at 1-19 (MKTVTALLLVSLAVVAIEG) is a signal peptide. Disulfide bonds link C27–C54 and C29–C71.

Belongs to the intercrine alpha (chemokine CxC) family.

The protein resides in the secreted. In terms of biological role, ligand for cxcr3.2. Chemotactic for macrophages. In Danio rerio (Zebrafish), this protein is C-X-C motif chemokine 11-1 (cxcl11.1).